We begin with the raw amino-acid sequence, 287 residues long: uncharacterized protein (287 aa).

A disordered region spans residues 1–23 (MTVSDSPAQRQTPPQTPGGTAPR). Positions 7-23 (PAQRQTPPQTPGGTAPR) are enriched in low complexity. The Mg(2+) site is built by aspartate 31, aspartate 33, and aspartate 204.

Belongs to the HAD-like hydrolase superfamily. SerB family.

This is an uncharacterized protein from Mycobacterium tuberculosis (strain CDC 1551 / Oshkosh).